Reading from the N-terminus, the 246-residue chain is Flagellar brake protein YcgR (246 aa).

A PilZ domain is found at 128 to 232 (KRAHFRAYVG…QAERQLLQAI (105 aa)).

It belongs to the YcgR family. As to quaternary structure, monomer. Interacts with the flagellar basal bodies.

The protein localises to the bacterial flagellum basal body. In terms of biological role, acts as a flagellar brake, regulating swimming and swarming in a bis-(3'-5') cyclic diguanylic acid (c-di-GMP)-dependent manner. Binds 1 c-di-GMP dimer per subunit. Increasing levels of c-di-GMP lead to decreased motility. This chain is Flagellar brake protein YcgR, found in Thioalkalivibrio sulfidiphilus (strain HL-EbGR7).